The sequence spans 217 residues: Oxygen regulatory protein NreC (217 aa).

One can recognise a Response regulatory domain in the interval 2-119 (KIVIADDHAV…QLLLAIRTVY (118 aa)). D53 is subject to 4-aspartylphosphate. Positions 148–213 (TSDPFKILSK…ELVEYALKKK (66 aa)) constitute an HTH luxR-type domain. A DNA-binding region (H-T-H motif) is located at residues 172-191 (NKEIAEKLFVSVKTVEAHKT).

In terms of processing, phosphorylated by NreB.

The protein resides in the cytoplasm. Its function is as follows. Member of the two-component regulatory system NreB/NreC involved in the control of dissimilatory nitrate/nitrite reduction in response to oxygen. Phosphorylated NreC binds to a GC-rich palindromic sequence at the promoters of the nitrate (narGHJI) and nitrite (nir) reductase operons, as well as the putative nitrate transporter gene narT, and activates their expression. The polypeptide is Oxygen regulatory protein NreC (nreC) (Staphylococcus aureus (strain bovine RF122 / ET3-1)).